The following is a 385-amino-acid chain: Histidinol-phosphate aminotransferase (385 aa).

Lys-230 is modified (N6-(pyridoxal phosphate)lysine).

Belongs to the class-II pyridoxal-phosphate-dependent aminotransferase family. It depends on pyridoxal 5'-phosphate as a cofactor.

It catalyses the reaction L-histidinol phosphate + 2-oxoglutarate = 3-(imidazol-4-yl)-2-oxopropyl phosphate + L-glutamate. The protein operates within amino-acid biosynthesis; L-histidine biosynthesis; L-histidine from 5-phospho-alpha-D-ribose 1-diphosphate: step 7/9. This chain is Histidinol-phosphate aminotransferase, found in Saccharomyces cerevisiae (strain ATCC 204508 / S288c) (Baker's yeast).